The following is a 128-amino-acid chain: MWSTRSPNSTAWPLSLEPDPGMASASTTMHTTTIAEPDPGMSGWPDGRMETSTPTIMDIVVIAGVIAAVAIVLVSLLFVMLRYMYRHKGTYHTNEAKGTEFAESADAALQGDPALQDAGDSSRKEYFI.

Over residues methionine 1–tryptophan 12 the composition is skewed to polar residues. Residues methionine 1–arginine 48 form a disordered region. The Extracellular segment spans residues methionine 1–methionine 57. Serine 3 carries an O-linked (GalNAc...) serine glycan. O-linked (GalNAc...) threonine glycosylation occurs at threonine 4. O-linked (GalNAc...) serine glycosylation occurs at serine 6. Asparagine 8 is a glycosylation site (N-linked (GlcNAc...) asparagine). O-linked (GalNAc...) serine glycosylation occurs at serine 9. Threonine 10 is a glycosylation site (O-linked (GalNAc...) threonine). Residues serine 15, serine 24, and serine 26 are each glycosylated (O-linked (GalNAc...) serine). The segment covering methionine 22–threonine 33 has biased composition (low complexity). Threonine 27, threonine 28, threonine 31, threonine 32, and threonine 33 each carry an O-linked (GalNAc...) threonine glycan. Serine 42 is a glycosylation site (O-linked (GalNAc...) serine). A helical; Signal-anchor for type III membrane protein membrane pass occupies residues aspartate 58 to leucine 81. Residues arginine 82–isoleucine 128 lie on the Cytoplasmic side of the membrane. Serine 104 and serine 122 each carry phosphoserine. The interval alanine 108–isoleucine 128 is disordered.

It belongs to the glycophorin-C family. In terms of processing, O-glycosylated with core 1 or possibly core 8 glycans. In terms of tissue distribution, glycophorin-C is expressed in erythrocytes. Glycophorin-D and IsoGPC are ubiquitously expressed.

The protein localises to the cell membrane. Its function is as follows. This protein is a minor sialoglycoprotein in human erythrocyte membranes. The blood group Gerbich antigens and receptors for Plasmodium falciparum merozoites are most likely located within the extracellular domain. Glycophorin-C plays an important role in regulating the stability of red cells. The polypeptide is Glycophorin-C (GYPC) (Homo sapiens (Human)).